The following is an 89-amino-acid chain: Small ribosomal subunit protein uS15 (89 aa).

Positions 1–22 are disordered; that stretch reads MPLSKEQKQEVMEKYKLHEHDT.

Belongs to the universal ribosomal protein uS15 family. Part of the 30S ribosomal subunit. Forms a bridge to the 50S subunit in the 70S ribosome, contacting the 23S rRNA.

In terms of biological role, one of the primary rRNA binding proteins, it binds directly to 16S rRNA where it helps nucleate assembly of the platform of the 30S subunit by binding and bridging several RNA helices of the 16S rRNA. Functionally, forms an intersubunit bridge (bridge B4) with the 23S rRNA of the 50S subunit in the ribosome. This Natranaerobius thermophilus (strain ATCC BAA-1301 / DSM 18059 / JW/NM-WN-LF) protein is Small ribosomal subunit protein uS15.